We begin with the raw amino-acid sequence, 625 residues long: Protein LEO1 homolog (625 aa).

2 disordered regions span residues 1–214 (MVKG…DMVL) and 415–625 (EREK…SDED). Acidic residues-rich tracts occupy residues 40 to 55 (DEAEGGVEPEGEGEAE) and 63 to 80 (EAESDGEQGDVELDPGES). Basic and acidic residues-rich tracts occupy residues 97-113 (SEARDSDSDNKEEEHGG), 121-137 (QEVVESGSERSGEKHYE), and 182-197 (EYVRNDVEQDEHRSPI). At serine 203 the chain carries Phosphoserine. Residues 415-425 (EREKEKREKAE) are compositionally biased toward basic and acidic residues. A coiled-coil region spans residues 415–539 (EREKEKREKA…ETEEEEEEKS (125 aa)). Residues 426–436 (SQNLKASTKLS) are compositionally biased toward polar residues. Positions 471–491 (YRSNRGYEEDLEAEAQRERRI) are enriched in basic and acidic residues. The span at 492-501 (LNAKKSHKGI) shows a compositional bias: basic residues. Residues 523–537 (EREESEYETEEEEEE) are compositionally biased toward acidic residues. The segment covering 538–547 (KSPARGRGKD) has biased composition (basic and acidic residues). Residues serine 548, serine 570, serine 600, serine 605, and serine 622 each carry the phosphoserine modification. The span at 548 to 561 (SEDEYEEDAEEDEE) shows a compositional bias: acidic residues.

The protein belongs to the LEO1 family. Component of the nuclear PAF1 complex (PAF1C), which consists of VIP2/ELF7/PAF1, VIP3/SKI8/WDR61, VIP4/LEO1, VIP5/RTF1, VIP6/ELF8/CTR9 and CDC73. Interacts with VIP3 and VIP6. Expressed in roots, shoot apices, stems, cauline leaves, inflorescence apices and flowers.

The protein localises to the nucleus. Component of the PAF1 complex (PAF1C) which is involved in histone modifications such as methylation on histone H3 'Lys-4' (H3K4me3). Involved in regulation of flowering time. Required for the expression of the flowering repressor and MADS box gene FLC. Involved in the control of seed dormancy and germination. The chain is Protein LEO1 homolog from Arabidopsis thaliana (Mouse-ear cress).